The following is a 411-amino-acid chain: BRO1 domain-containing protein BROX (411 aa).

A BRO1 domain is found at 90 to 408 (FKWTDTLQGH…DIRPQKDTGC (319 aa)). Residues 375-404 (LTKRPKDDSVKPKPEEDVKPVKEPDIRPQK) are compositionally biased toward basic and acidic residues. A disordered region spans residues 375–411 (LTKRPKDDSVKPKPEEDVKPVKEPDIRPQKDTGCSVS). Cysteine 408 is subject to Cysteine methyl ester. The S-farnesyl cysteine moiety is linked to residue cysteine 408. A propeptide spans 409–411 (SVS) (removed in mature form).

Belongs to the BROX family. Monomer. Interacts with CHMP4B. Interacts with CHMP5: this interaction allows the recruitment of BROX to cellular membranes. Interacts with SYN2; this interaction promotes SYN2 ubiquitination and facilitates the relaxation of mechanical stress imposed by compressive actin fibers at the rupture site. In terms of processing, farnesylation is required for nuclear envelope localization.

Its subcellular location is the nucleus membrane. In terms of biological role, nuclear envelope-associated factor that is involved in the nuclear envelope ruptures during interphase (NERDI) repair, where it is locally recruited by CHMP5 and reduces cytoskeletal stress through its action on SYN2 to help reseal the ruptured membrane. The chain is BRO1 domain-containing protein BROX from Mus musculus (Mouse).